We begin with the raw amino-acid sequence, 419 residues long: UDP-N-acetylglucosamine 1-carboxyvinyltransferase (419 aa).

Position 22-23 (K22–N23) interacts with phosphoenolpyruvate. UDP-N-acetyl-alpha-D-glucosamine is bound at residue R93. The active-site Proton donor is the C117. The residue at position 117 (C117) is a 2-(S-cysteinyl)pyruvic acid O-phosphothioketal. UDP-N-acetyl-alpha-D-glucosamine-binding positions include R122–L126, D308, and I330.

This sequence belongs to the EPSP synthase family. MurA subfamily.

The protein resides in the cytoplasm. The enzyme catalyses phosphoenolpyruvate + UDP-N-acetyl-alpha-D-glucosamine = UDP-N-acetyl-3-O-(1-carboxyvinyl)-alpha-D-glucosamine + phosphate. Its pathway is cell wall biogenesis; peptidoglycan biosynthesis. Cell wall formation. Adds enolpyruvyl to UDP-N-acetylglucosamine. This Pseudomonas putida (Arthrobacter siderocapsulatus) protein is UDP-N-acetylglucosamine 1-carboxyvinyltransferase.